Consider the following 61-residue polypeptide: Furostanol glycoside 26-O-beta-glucosidase (61 aa).

The Proton donor/acceptor role is filled by aspartate 33. Aspartate 33 is a binding site for D-glucose.

This sequence belongs to the glycosyl hydrolase 3 family. Monomer. In terms of processing, glycosylated. Expressed in petioles and leaves, but not in fruits.

It catalyses the reaction protodioscin + H2O = 26-deglucoprotodioscin + D-glucose. With respect to regulation, inhibited by Hg(2+) and D-glucono-1,5-lactone. Functionally, beta-glucosidase highly specific for the cleavage of C-26-bound glucose moiety of furostanol glycosides torvosides A and H. Hydrolyzes only p-nitrophenyl-beta-glucoside, but not p-nitrophenyl-beta-D-fucoside, p-nitrophenyl-beta-L-fucoside, p-nitrophenyl-beta-D-xyloside, p-nitrophenyl-beta-D-galactoside, p-nitrophenyl-beta-D-NAc-glucosamine, p-nitrophenyl-beta-D-mannoside or any of the p-nitrophenyl-alpha-glycosides tested. The protein is Furostanol glycoside 26-O-beta-glucosidase of Solanum torvum (Turkey berry).